The following is a 20-amino-acid chain: Fibrinogen beta chain (20 aa).

At Y5 the chain carries Sulfotyrosine.

In terms of assembly, heterohexamer; disulfide linked. Contains 2 sets of 3 non-identical chains (alpha, beta and gamma). The 2 heterotrimers are in head to head conformation with the N-termini in a small central domain. Conversion of fibrinogen to fibrin is triggered by thrombin, which cleaves fibrinopeptides A and B from alpha and beta chains, and thus exposes the N-terminal polymerization sites responsible for the formation of the soft clot.

It is found in the secreted. Functionally, cleaved by the protease thrombin to yield monomers which, together with fibrinogen alpha (FGA) and fibrinogen gamma (FGG), polymerize to form an insoluble fibrin matrix. Fibrin has a major function in hemostasis as one of the primary components of blood clots. In addition, functions during the early stages of wound repair to stabilize the lesion and guide cell migration during re-epithelialization. Was originally thought to be essential for platelet aggregation, based on in vitro studies using anticoagulated blood. However subsequent studies have shown that it is not absolutely required for thrombus formation in vivo. Enhances expression of SELP in activated platelets. Maternal fibrinogen is essential for successful pregnancy. Fibrin deposition is also associated with infection, where it protects against IFNG-mediated hemorrhage. May also facilitate the antibacterial immune response via both innate and T-cell mediated pathways. This is Fibrinogen beta chain (FGB) from Capra hircus (Goat).